Here is a 75-residue protein sequence, read N- to C-terminus: Translational regulator CsrA (75 aa).

The protein belongs to the CsrA/RsmA family. As to quaternary structure, homodimer; the beta-strands of each monomer intercalate to form a hydrophobic core, while the alpha-helices form wings that extend away from the core. Interacts with FliW.

It localises to the cytoplasm. In terms of biological role, a translational regulator that binds mRNA to regulate translation initiation and/or mRNA stability. Usually binds in the 5'-UTR at or near the Shine-Dalgarno sequence preventing ribosome-binding, thus repressing translation. Its function is probably anatagonized by FliW. Inhibits translation of flaA mRNA in vitro. Involved in post-transcriptional regulation of flagellin biosynthesis. The protein is Translational regulator CsrA of Campylobacter jejuni subsp. jejuni serotype O:6 (strain 81116 / NCTC 11828).